A 209-amino-acid polypeptide reads, in one-letter code: Protein bli-3 (209 aa).

Residues Met1–Thr11 show a composition bias toward polar residues. A disordered region spans residues Met1 to Leu24.

This is Protein bli-3 (bli-3) from Neurospora crassa (strain ATCC 24698 / 74-OR23-1A / CBS 708.71 / DSM 1257 / FGSC 987).